The following is a 383-amino-acid chain: L-aspartate/L-glutamate decarboxylase (383 aa).

Lys232 carries the N6-(pyridoxal phosphate)lysine modification.

Belongs to the group II decarboxylase family. MfnA subfamily. As to quaternary structure, monomer. Pyridoxal 5'-phosphate serves as cofactor.

The enzyme catalyses L-aspartate + H(+) = beta-alanine + CO2. It carries out the reaction L-glutamate + H(+) = 4-aminobutanoate + CO2. It catalyses the reaction L-cysteate + H(+) = taurine + CO2. The catalysed reaction is 3-sulfino-L-alanine + H(+) = hypotaurine + CO2. It functions in the pathway cofactor biosynthesis; coenzyme A biosynthesis. Its function is as follows. Catalyzes the decarboxylation of L-aspartate to produce beta-alanine, and the decarboxylation of L-glutamate to produce 4-aminobutanoate. Can also use cysteate and, to a lesser extent, cysteine sulfite (3-sulfino-L-alanine), but not L-tyrosine. Specific activities toward L-aspartate and cysteate are higher than toward L-glutamate. The polypeptide is L-aspartate/L-glutamate decarboxylase (Pyrococcus horikoshii (strain ATCC 700860 / DSM 12428 / JCM 9974 / NBRC 100139 / OT-3)).